A 250-amino-acid polypeptide reads, in one-letter code: Probable transcriptional regulatory protein Mmc1_0479 (250 aa).

The protein belongs to the TACO1 family.

The protein resides in the cytoplasm. This Magnetococcus marinus (strain ATCC BAA-1437 / JCM 17883 / MC-1) protein is Probable transcriptional regulatory protein Mmc1_0479.